A 1909-amino-acid chain; its full sequence is Endoribonuclease Dicer homolog 1 (1909 aa).

The interval 99-177 is disordered; it reads TVKENGLQKN…NNKKKRECNN (79 aa). The span at 110–124 shows a compositional bias: basic and acidic residues; the sequence is GKRDEFSKEEGDKDR. Over residues 131 to 146 the composition is skewed to polar residues; it reads SYQSERSNLSGRGHVN. Over residues 147 to 177 the composition is skewed to basic and acidic residues; it reads NSREGDRFMNRKRTRNWDEAGNNKKKRECNN. The Helicase ATP-binding domain occupies 256–433; the sequence is VLEQAKAKNT…QVDCAIKIRN (178 aa). Residue 269-276 coordinates ATP; it reads LETGAGKT. Residues 378–381 carry the DECH box motif; sequence DECH. A Helicase C-terminal domain is found at 651 to 812; that stretch reads SLIKLLLKYQ…RTDLSHLKDT (162 aa). A Dicer dsRNA-binding fold domain is found at 840 to 935; it reads AVGLVHFYCS…LPDKGSGQDA (96 aa). A disordered region spans residues 929–952; it reads KGSGQDAEKADQDDEGEPVPGTAR. In terms of domain architecture, PAZ spans 1189-1318; the sequence is EVEEDLSKGK…LPPELCVVHP (130 aa). 2 consecutive RNase III domains span residues 1342–1518 and 1559–1707; these read LAVQ…VEGG and FVGL…LDSG. Mg(2+)-binding residues include E1597, D1693, and E1696. 2 consecutive DRBM domains span residues 1733–1796 and 1831–1906; these read HPVR…ALKE and FTRQ…LLNK. Residues 1801–1831 are disordered; it reads ESKEKHINNGNAGEDQGENENGNKKNGHQPF.

The protein belongs to the helicase family. Dicer subfamily. In terms of assembly, interacts (via N-terminus) with DDL. Interacts (via DRBM domains) with DRB1, DRB2 and DRB5. May interact with AGO1 or AGO10 through their common PAZ domains. Requires Mg(2+) as cofactor. Mn(2+) serves as cofactor. As to expression, highly expressed in flowers and seeds and detected in leaves and stems. Found in ovule integuments, inflorescence and floral meristems, stigma of flowers until just before pollination, vasculature of the funiculus, and embryo.

It is found in the nucleus. In terms of biological role, ribonuclease (RNase) III involved in RNA-mediated post-transcriptional gene silencing (PTGS). Functions in the microRNAs (miRNAs) biogenesis pathway by cleaving primary miRNAs (pri-miRNAs) and precursor miRNAs (pre-miRNAs). Functions with DRB1/HYL1 and SERRATE proteins for accurate pri-miRNAs to miRNAs processing. Indirectly involved in the production of trans-acting small interfering RNAs (ta-siRNAs) derived from the TAS1, TAS2 or TAS3 endogenous transcripts by participating in the production of their initiating miRNAs. Involved in the processing of natural siRNAs (nat-siRNAs, derived from cis-natural antisense transcripts) by cleaving 24 nucleotide nat-siRNAs into 21 nucleotide nat-siRNAs. Can produce RDR6-dependent endogenous ta-siRNAs derived from TAS1 and TAS2. Required for the production of 30-40 nucleotide bacterial-induced long siRNAs (lsiRNA). Acts redundantly with DICER-LIKE 3 (DCL3) to promote flowering via repression of FLOWERING LOCUS C (FLC). Represses antiviral RNA silencing through negative regulation of the expression of DCL4 and DCL3. This is Endoribonuclease Dicer homolog 1 (DCL1) from Arabidopsis thaliana (Mouse-ear cress).